Consider the following 72-residue polypeptide: Translation initiation factor IF-1 (72 aa).

Residues 1 to 72 (MAKEGAIEVE…TRGRIVYRYK (72 aa)) enclose the S1-like domain.

The protein belongs to the IF-1 family. As to quaternary structure, component of the 30S ribosomal translation pre-initiation complex which assembles on the 30S ribosome in the order IF-2 and IF-3, IF-1 and N-formylmethionyl-tRNA(fMet); mRNA recruitment can occur at any time during PIC assembly.

It localises to the cytoplasm. Its function is as follows. One of the essential components for the initiation of protein synthesis. Stabilizes the binding of IF-2 and IF-3 on the 30S subunit to which N-formylmethionyl-tRNA(fMet) subsequently binds. Helps modulate mRNA selection, yielding the 30S pre-initiation complex (PIC). Upon addition of the 50S ribosomal subunit IF-1, IF-2 and IF-3 are released leaving the mature 70S translation initiation complex. The chain is Translation initiation factor IF-1 from Corynebacterium glutamicum (strain R).